Here is a 200-residue protein sequence, read N- to C-terminus: MTEELKNKKINKKYYSQNRNKTKAEFQKADIKKNQYLNLKTKLNNVLLEVQNLKELNETLKKELKSEKQLNLAEISNLTKKYNQKELETKKYGASNLAKDLIQPLEILKKVVNAPNNNEVVQAYVKGFEMIINQINNVLESHHIKAMNVKVGDMFDPHLHDANEAVETDEYKTNQIVGVLSDGYMIHDKVLVYAIVKVAK.

Belongs to the GrpE family. In terms of assembly, homodimer.

It localises to the cytoplasm. In terms of biological role, participates actively in the response to hyperosmotic and heat shock by preventing the aggregation of stress-denatured proteins, in association with DnaK and GrpE. It is the nucleotide exchange factor for DnaK and may function as a thermosensor. Unfolded proteins bind initially to DnaJ; upon interaction with the DnaJ-bound protein, DnaK hydrolyzes its bound ATP, resulting in the formation of a stable complex. GrpE releases ADP from DnaK; ATP binding to DnaK triggers the release of the substrate protein, thus completing the reaction cycle. Several rounds of ATP-dependent interactions between DnaJ, DnaK and GrpE are required for fully efficient folding. The chain is Protein GrpE from Mycoplasma mycoides subsp. mycoides SC (strain CCUG 32753 / NCTC 10114 / PG1).